Consider the following 351-residue polypeptide: Protein RecA (351 aa).

73-80 lines the ATP pocket; that stretch reads GPESSGKT.

It belongs to the RecA family.

It localises to the cytoplasm. Functionally, can catalyze the hydrolysis of ATP in the presence of single-stranded DNA, the ATP-dependent uptake of single-stranded DNA by duplex DNA, and the ATP-dependent hybridization of homologous single-stranded DNAs. It interacts with LexA causing its activation and leading to its autocatalytic cleavage. The sequence is that of Protein RecA from Oleidesulfovibrio alaskensis (strain ATCC BAA-1058 / DSM 17464 / G20) (Desulfovibrio alaskensis).